We begin with the raw amino-acid sequence, 108 residues long: Large ribosomal subunit protein uL23 (108 aa).

The protein belongs to the universal ribosomal protein uL23 family. As to quaternary structure, part of the 50S ribosomal subunit. Contacts protein L29, and trigger factor when it is bound to the ribosome.

Its function is as follows. One of the early assembly proteins it binds 23S rRNA. One of the proteins that surrounds the polypeptide exit tunnel on the outside of the ribosome. Forms the main docking site for trigger factor binding to the ribosome. This Albidiferax ferrireducens (strain ATCC BAA-621 / DSM 15236 / T118) (Rhodoferax ferrireducens) protein is Large ribosomal subunit protein uL23.